A 278-amino-acid chain; its full sequence is HTH-type transcriptional activator RhaS (278 aa).

The HTH araC/xylS-type domain maps to 174-272; sequence NLLLAWLEDH…NWSPRDIRQG (99 aa). 2 DNA-binding regions (H-T-H motif) span residues 191-212 and 239-262; these read DAVA…KQQT and VTDI…RREF.

As to quaternary structure, binds DNA as a dimer.

It localises to the cytoplasm. Activates expression of the rhaBAD and rhaT operons. The polypeptide is HTH-type transcriptional activator RhaS (Shigella flexneri serotype 5b (strain 8401)).